Reading from the N-terminus, the 316-residue chain is ATP synthase gamma chain (316 aa).

Belongs to the ATPase gamma chain family. As to quaternary structure, F-type ATPases have 2 components, CF(1) - the catalytic core - and CF(0) - the membrane proton channel. CF(1) has five subunits: alpha(3), beta(3), gamma(1), delta(1), epsilon(1). CF(0) has three main subunits: a, b and c.

It is found in the cellular thylakoid membrane. Functionally, produces ATP from ADP in the presence of a proton gradient across the membrane. The gamma chain is believed to be important in regulating ATPase activity and the flow of protons through the CF(0) complex. This is ATP synthase gamma chain from Prochlorococcus marinus (strain AS9601).